The chain runs to 788 residues: Leucine-rich repeat and fibronectin type-III domain-containing protein 2 (788 aa).

The N-terminal stretch at 1–20 (METLLGGLLAFGMAFAVVDA) is a signal peptide. Residues 21–52 (CPKYCVCQNLSESLGTLCPSKGLLFVPPDIDR) form the LRRNT domain. Residues 21–534 (CPKYCVCQNL…MHSQILGGTM (514 aa)) lie on the Extracellular side of the membrane. N-linked (GlcNAc...) asparagine glycosylation is present at asparagine 29. 7 LRR repeats span residues 53-74 (RTVE…DFAN), 77-98 (GLVD…SFLD), 101-122 (SLRS…TLRG), 125-146 (NLQH…AFED), 150-171 (TLED…SVRR), 174-195 (NLHQ…TFAD), and 198-219 (KLAR…PIFA). One can recognise an LRRCT domain in the interval 242–288 (NPLHCNCELLWLRRLERDDDLETCGSPGSLKGRYFWHIREEEFVCEP). The 87-residue stretch at 289 to 375 (PLITQHTHKL…GEATATVEVS (87 aa)) folds into the Ig-like domain. A disulfide bond links cysteine 310 and cysteine 359. N-linked (GlcNAc...) asparagine glycans are attached at residues asparagine 332, asparagine 341, and asparagine 384. The interval 383–423 (SNSTSRMAPPKSRLSDITGSSKTSRGGGGSGAGEPPKSTPE) is disordered. The Fibronectin type-III domain maps to 422–518 (PERAVLVSDV…GCAQFFTKAD (97 aa)). A helical transmembrane segment spans residues 535 to 555 (ILVIGGIIVATLLVFIVILMV). Topologically, residues 556-788 (RYKVCNHDTP…SSEWVMESTV (233 aa)) are cytoplasmic. Positions 620-631 (CDSSSSSSLGSG) are enriched in low complexity. Disordered stretches follow at residues 620 to 655 (CDSS…PSLD) and 668 to 711 (SQRK…RSLL). Pro residues predominate over residues 642-651 (RLPPPAPRPK). A PDZ-binding motif is present at residues 785–788 (ESTV).

This sequence belongs to the LRFN family. As to quaternary structure, forms heteromeric complexes with LRFN1, LRFN3, LRFN4 and LRFN5. Can form homomeric complexes, but not across cell junctions. Interacts with DLG4. Directly interacts with DLG1, DLG2 and DLG3. Directly interacts with 2 NMDA receptor subunits GRIN1 and GRIN2A. Post-translationally, glycosylated. As to expression, predominantly expressed in the brain, with a weak, but broad expression in the cerebral cortex and diencephalic nuclei. Strongly expressed in both the pyramidal layer and the dentate gyrus of the hippocampus. Also detected in other parts of the central nervous system, including the olfactory bulb, pons, cerebellum, and medulla oblongata, as well as in the peripheral nervous system, such as the ganglia of cranial nerves and the dorsal root ganglion during gestation.

The protein resides in the membrane. The protein localises to the synapse. It localises to the postsynaptic cell membrane. Functionally, promotes neurite outgrowth in hippocampal neurons. Enhances the cell surface expression of 2 NMDA receptor subunits GRIN1 and GRIN2A. May play a role in redistributing DLG4 to the cell periphery. In Mus musculus (Mouse), this protein is Leucine-rich repeat and fibronectin type-III domain-containing protein 2 (Lrfn2).